Consider the following 566-residue polypeptide: Urease subunit alpha (566 aa).

In terms of domain architecture, Urease spans 128 to 566 (GGVDTHIHFI…LPMAQRYFLF (439 aa)). Positions 133, 135, and 216 each coordinate Ni(2+). Residue lysine 216 is modified to N6-carboxylysine. Histidine 218 contributes to the substrate binding site. 2 residues coordinate Ni(2+): histidine 245 and histidine 271. Histidine 319 functions as the Proton donor in the catalytic mechanism. Aspartate 359 lines the Ni(2+) pocket.

The protein belongs to the metallo-dependent hydrolases superfamily. Urease alpha subunit family. As to quaternary structure, may form a heterohexamer of 3 UreC (alpha) and 3 UreAB (gamma/beta) subunits. May also form a heterotrimer of UreA (gamma), UreB (beta) and UreC (alpha) subunits. Three heterotrimers associate to form the active enzyme. It depends on Ni cation as a cofactor. Post-translationally, carboxylation allows a single lysine to coordinate two nickel ions.

The protein resides in the cytoplasm. The catalysed reaction is urea + 2 H2O + H(+) = hydrogencarbonate + 2 NH4(+). It participates in nitrogen metabolism; urea degradation; CO(2) and NH(3) from urea (urease route): step 1/1. The sequence is that of Urease subunit alpha from Pseudomonas syringae pv. tomato (strain ATCC BAA-871 / DC3000).